The following is a 428-amino-acid chain: Adenylosuccinate synthetase (428 aa).

GTP-binding positions include 12–18 (GDEGKGK) and 40–42 (GHT). Asp-13 functions as the Proton acceptor in the catalytic mechanism. Asp-13 and Gly-40 together coordinate Mg(2+). Residues 13–16 (DEGK), 38–41 (NAGH), Thr-130, Arg-144, Gln-225, Thr-240, and Arg-304 contribute to the IMP site. The Proton donor role is filled by His-41. 300-306 (VNTGRSR) contacts substrate. GTP contacts are provided by residues Arg-306, 332 to 334 (KID), and 414 to 416 (GVG).

The protein belongs to the adenylosuccinate synthetase family. As to quaternary structure, homodimer. The cofactor is Mg(2+).

It localises to the cytoplasm. It catalyses the reaction IMP + L-aspartate + GTP = N(6)-(1,2-dicarboxyethyl)-AMP + GDP + phosphate + 2 H(+). It functions in the pathway purine metabolism; AMP biosynthesis via de novo pathway; AMP from IMP: step 1/2. Plays an important role in the de novo pathway of purine nucleotide biosynthesis. Catalyzes the first committed step in the biosynthesis of AMP from IMP. The polypeptide is Adenylosuccinate synthetase (Clostridium beijerinckii (strain ATCC 51743 / NCIMB 8052) (Clostridium acetobutylicum)).